Here is a 149-residue protein sequence, read N- to C-terminus: UPF0208 membrane protein VSAL_I2111 (149 aa).

Transmembrane regions (helical) follow at residues 41-61 (FAVKVMPAVAVISVLTQMVFN) and 69-89 (SIIIALFAISMPLQGFWWLGN).

This sequence belongs to the UPF0208 family.

It is found in the cell inner membrane. This Aliivibrio salmonicida (strain LFI1238) (Vibrio salmonicida (strain LFI1238)) protein is UPF0208 membrane protein VSAL_I2111.